Consider the following 20-residue polypeptide: Large ribosomal subunit protein bL33 (20 aa).

Belongs to the bacterial ribosomal protein bL33 family.

The polypeptide is Large ribosomal subunit protein bL33 (rpmG) (Brevundimonas vesicularis (Pseudomonas vesicularis)).